The following is a 110-amino-acid chain: UPF0339 protein YegP (110 aa).

2 repeat units span residues 10 to 58 (SSDN…RYEK) and 61 to 109 (ASNG…VKDN).

Belongs to the UPF0339 family. Duplicated subfamily.

This is UPF0339 protein YegP (yegP) from Escherichia coli O6:H1 (strain CFT073 / ATCC 700928 / UPEC).